Consider the following 161-residue polypeptide: Nucleotide-binding protein Rfer_2692 (161 aa).

It belongs to the YajQ family.

Functionally, nucleotide-binding protein. This is Nucleotide-binding protein Rfer_2692 from Albidiferax ferrireducens (strain ATCC BAA-621 / DSM 15236 / T118) (Rhodoferax ferrireducens).